Here is a 610-residue protein sequence, read N- to C-terminus: Phosphomethylpyrimidine synthase (610 aa).

Substrate is bound by residues Asn-216, Met-245, Tyr-274, His-310, 330–332, 371–374, and Glu-410; these read SRG and DGLR. Position 414 (His-414) interacts with Zn(2+). Tyr-437 lines the substrate pocket. A Zn(2+)-binding site is contributed by His-478. The [4Fe-4S] cluster site is built by Cys-558, Cys-561, and Cys-566.

This sequence belongs to the ThiC family. In terms of assembly, homodimer. [4Fe-4S] cluster serves as cofactor.

It carries out the reaction 5-amino-1-(5-phospho-beta-D-ribosyl)imidazole + S-adenosyl-L-methionine = 4-amino-2-methyl-5-(phosphooxymethyl)pyrimidine + CO + 5'-deoxyadenosine + formate + L-methionine + 3 H(+). The protein operates within cofactor biosynthesis; thiamine diphosphate biosynthesis. Catalyzes the synthesis of the hydroxymethylpyrimidine phosphate (HMP-P) moiety of thiamine from aminoimidazole ribotide (AIR) in a radical S-adenosyl-L-methionine (SAM)-dependent reaction. The polypeptide is Phosphomethylpyrimidine synthase (Allorhizobium ampelinum (strain ATCC BAA-846 / DSM 112012 / S4) (Agrobacterium vitis (strain S4))).